Reading from the N-terminus, the 318-residue chain is Beta-ketoacyl-[acyl-carrier-protein] synthase III (318 aa).

Active-site residues include C112 and H245. The tract at residues 246–250 is ACP-binding; it reads QANIR. N275 is a catalytic residue.

The protein belongs to the thiolase-like superfamily. FabH family. In terms of assembly, homodimer.

The protein resides in the cytoplasm. It carries out the reaction malonyl-[ACP] + acetyl-CoA + H(+) = 3-oxobutanoyl-[ACP] + CO2 + CoA. It participates in lipid metabolism; fatty acid biosynthesis. In terms of biological role, catalyzes the condensation reaction of fatty acid synthesis by the addition to an acyl acceptor of two carbons from malonyl-ACP. Catalyzes the first condensation reaction which initiates fatty acid synthesis and may therefore play a role in governing the total rate of fatty acid production. Possesses both acetoacetyl-ACP synthase and acetyl transacylase activities. Its substrate specificity determines the biosynthesis of branched-chain and/or straight-chain of fatty acids. In Nitrosomonas europaea (strain ATCC 19718 / CIP 103999 / KCTC 2705 / NBRC 14298), this protein is Beta-ketoacyl-[acyl-carrier-protein] synthase III.